The chain runs to 114 residues: Ig kappa chain V-I region S107A (114 aa).

The segment at 1–23 (DIVMTQSPTFLAVTASKKVTISC) is framework-1. Cys-23 and Cys-94 are disulfide-bonded. The segment at 24-40 (TASESLYSSKHKVHYLA) is complementarity-determining-1. Positions 41 to 55 (WYQKKPEQSPKLLIY) are framework-2. A complementarity-determining-2 region spans residues 56–62 (GASNRYI). The framework-3 stretch occupies residues 63-94 (GVPDRFTGSGSGTDFTLTISSVQVEDLTHYYC). The complementarity-determining-3 stretch occupies residues 95-103 (AQFYSYPLT). The tract at residues 104 to 113 (FGAGTKLELK) is framework-4.

Its function is as follows. Anti-phosphocholine antibody. The chain is Ig kappa chain V-I region S107A (Igkv7-33) from Mus musculus (Mouse).